The primary structure comprises 272 residues: Putative phosphoenolpyruvate synthase regulatory protein (272 aa).

Position 152–159 (152–159 (GVSRCGKT)) interacts with ADP.

It belongs to the pyruvate, phosphate/water dikinase regulatory protein family. PSRP subfamily.

The catalysed reaction is [pyruvate, water dikinase] + ADP = [pyruvate, water dikinase]-phosphate + AMP + H(+). It catalyses the reaction [pyruvate, water dikinase]-phosphate + phosphate + H(+) = [pyruvate, water dikinase] + diphosphate. Functionally, bifunctional serine/threonine kinase and phosphorylase involved in the regulation of the phosphoenolpyruvate synthase (PEPS) by catalyzing its phosphorylation/dephosphorylation. In Pseudomonas fluorescens (strain SBW25), this protein is Putative phosphoenolpyruvate synthase regulatory protein.